The sequence spans 461 residues: L-seryl-tRNA(Sec) selenium transferase (461 aa).

Lysine 294 bears the N6-(pyridoxal phosphate)lysine mark.

This sequence belongs to the SelA family. The cofactor is pyridoxal 5'-phosphate.

The protein localises to the cytoplasm. It carries out the reaction L-seryl-tRNA(Sec) + selenophosphate + H(+) = L-selenocysteinyl-tRNA(Sec) + phosphate. Its pathway is aminoacyl-tRNA biosynthesis; selenocysteinyl-tRNA(Sec) biosynthesis; selenocysteinyl-tRNA(Sec) from L-seryl-tRNA(Sec) (bacterial route): step 1/1. Functionally, converts seryl-tRNA(Sec) to selenocysteinyl-tRNA(Sec) required for selenoprotein biosynthesis. The chain is L-seryl-tRNA(Sec) selenium transferase from Actinobacillus pleuropneumoniae serotype 7 (strain AP76).